The sequence spans 741 residues: MEHTYQYAWIIPFVPLPVPIAIGVGLLLVPTATKSLRRMWAFLSVLLLSIIMIFSADLSIQQIKGSLIHQYVWSWTINNDFSLEFGYLIDPLTSIMLILITTVGIMVLIYSDNYMSHDQGYLRFFAYMSFSNASMLGLVTSCNLIQIYIFWELVGMCSYLLIGFWFTRPIAASACQKAFVTNRVGDFGLLLGILGFYFITGSFEFRDLFEITNNLMDNGGVNSLFLTLCASLLFVGAIAKSAQFPLHVWLPDAMEGPTPISALIHAATMVAAGIFLVARLLPLFTVIPYVMNFISLIGIITILLGATLALAQRDIKRSLAYSTMSQLGYTMLALGMGSYRAALFHLITHAYSKALLFLGSGSIIHSMETVIGYSPEKSQNMVLMGGLTKYVPITKTAFLLGTLSLCGIPPLACFWSKDEILNDSWLYSPIFAIIACFTAGLTAFYMFRMYLLTFEGHLNAHFQNYSGKKNSSFYSISIWGKEGAKAIKQNSVLSTMNNNESAYLFSKKTYPIDGNVRNMMRSLITITNFSNKKTSPYPHESDNTMLLPLLILVLFTLFVGFIGIPFDQGGIDFDILSKLLTPSINLLHSNSNNSVDWYEFVTNAFFSVSIAYSGIFIASLLYRPVYSSFQNLDLINSFVKMSPKRIFWDKIINVIYNWSYNRGYIDVFYTTTFTRGIRGVAELIYFFDRQVIDGITNGVGITSFFVGEGIKYVGGGRISSYLFLYLFYVSIFLLIYYFFNL.

Transmembrane regions (helical) follow at residues 9–29, 40–60, 89–109, 125–145, 147–167, 185–205, 219–239, 258–278, 283–303, 327–347, 354–374, 396–416, 425–445, 546–566, 600–620, and 721–741; these read WIIP…LLLV, WAFL…DLSI, IDPL…MVLI, FAYM…CNLI, IYIF…FWFT, GDFG…SFEF, GGVN…GAIA, TPIS…FLVA, LFTV…ITIL, LGYT…FHLI, ALLF…IGYS, TAFL…CFWS, WLYS…TAFY, LLPL…GIPF, FVTN…IASL, and YLFL…FFNL.

Belongs to the complex I subunit 5 family. NDH is composed of at least 16 different subunits, 5 of which are encoded in the nucleus.

It localises to the plastid. The protein localises to the chloroplast thylakoid membrane. The enzyme catalyses a plastoquinone + NADH + (n+1) H(+)(in) = a plastoquinol + NAD(+) + n H(+)(out). The catalysed reaction is a plastoquinone + NADPH + (n+1) H(+)(in) = a plastoquinol + NADP(+) + n H(+)(out). In terms of biological role, NDH shuttles electrons from NAD(P)H:plastoquinone, via FMN and iron-sulfur (Fe-S) centers, to quinones in the photosynthetic chain and possibly in a chloroplast respiratory chain. The immediate electron acceptor for the enzyme in this species is believed to be plastoquinone. Couples the redox reaction to proton translocation, and thus conserves the redox energy in a proton gradient. The polypeptide is NAD(P)H-quinone oxidoreductase subunit 5, chloroplastic (ndhF) (Nandina domestica (Heavenly bamboo)).